A 186-amino-acid chain; its full sequence is Riboflavin kinase (186 aa).

Residues Thr42 and Asn44 each coordinate Mg(2+). The active-site Nucleophile is Glu123.

This sequence belongs to the flavokinase family. It depends on Zn(2+) as a cofactor. Requires Mg(2+) as cofactor.

It catalyses the reaction riboflavin + ATP = FMN + ADP + H(+). Its pathway is cofactor biosynthesis; FMN biosynthesis; FMN from riboflavin (ATP route): step 1/1. Functionally, catalyzes the phosphorylation of riboflavin (vitamin B2) to form flavin mononucleotide (FMN) coenzyme. The chain is Riboflavin kinase (FMN1) from Eremothecium gossypii (strain ATCC 10895 / CBS 109.51 / FGSC 9923 / NRRL Y-1056) (Yeast).